The primary structure comprises 705 residues: p-hydroxybenzoic acid--AMP ligase FadD22 (705 aa).

A Carrier domain is found at 541–619; sequence ERQRLVVDAV…GLAQYLEAEL (79 aa). An O-(pantetheine 4'-phosphoryl)serine modification is found at serine 579.

It belongs to the ATP-dependent AMP-binding enzyme family.

The enzyme catalyses holo-[4-hydroxyphenylalkanoate synthase] + 4-hydroxybenzoate + ATP = 4-hydroxyphenyl-[4-hydroxyphenylalkanoate synthase] + AMP + diphosphate. Its pathway is lipid metabolism; fatty acid biosynthesis. Catalyzes the adenylation of p-hydroxybenzoic acid (pHBA) to form p-hydroxybenzoic acid-AMP (pHBA-AMP), which is converted directly to p-hydroxybenzoyl-S-FadD22 (pHBA-S-FAdD22) thioester intermediate in a CoA-independent manner by attack of the phosphopantetheine thiol of FadD22. Usually, this intermediate primes the biosynthesis of the phenolphthiocerol (PPOL) by presenting the pHBA starter unit for elongation by Pks15/1, but M.tuberculosis lacks Pks15/1 due to a natural frameshift and thus is unable to produce PPOL. This chain is p-hydroxybenzoic acid--AMP ligase FadD22 (fadD22), found in Mycobacterium tuberculosis (strain CDC 1551 / Oshkosh).